A 55-amino-acid polypeptide reads, in one-letter code: Light-harvesting polypeptide B-800/860 beta chain (55 aa).

Residues 1–21 are Cytoplasmic-facing; the sequence is ADANKVWPTGLTVAEAEELHT. A helical transmembrane segment spans residues 22-44; that stretch reads YVTNGFRVFVGIAVVAHVLVFAA. Histidine 38 lines the a bacteriochlorophyll pocket. The Periplasmic segment spans residues 45-55; that stretch reads HPWGRGGALVA.

This sequence belongs to the antenna complex beta subunit family. The core complex is formed by different alpha and beta chains, binding bacteriochlorophyll molecules, and arranged most probably in tetrameric structures disposed around the reaction center. The non-pigmented gamma chains may constitute additional components.

The protein localises to the cell inner membrane. Antenna complexes are light-harvesting systems, which transfer the excitation energy to the reaction centers. In Rhodocyclus tenuis (Rhodospirillum tenue), this protein is Light-harvesting polypeptide B-800/860 beta chain.